A 214-amino-acid polypeptide reads, in one-letter code: Adenylate kinase (214 aa).

Position 10 to 15 (10 to 15) interacts with ATP; the sequence is GAGKGT. The interval 30 to 59 is NMP; sequence STGDMLRAAVKAGTPLGLEAKKVMDAGQLV. Residues Thr-31, Arg-36, 57–59, 85–88, and Gln-92 contribute to the AMP site; these read QLV and GFPR. Positions 122–159 are LID; that stretch reads GRRVHPGSGRVYHIVYNPPKVEGKDDVTGEDLAIRPDD. Residues Arg-123 and 132 to 133 each bind ATP; that span reads VY. Positions 156 and 167 each coordinate AMP. ATP is bound at residue Gln-200.

The protein belongs to the adenylate kinase family. As to quaternary structure, monomer.

Its subcellular location is the cytoplasm. The enzyme catalyses AMP + ATP = 2 ADP. It functions in the pathway purine metabolism; AMP biosynthesis via salvage pathway; AMP from ADP: step 1/1. Its function is as follows. Catalyzes the reversible transfer of the terminal phosphate group between ATP and AMP. Plays an important role in cellular energy homeostasis and in adenine nucleotide metabolism. This chain is Adenylate kinase, found in Shewanella loihica (strain ATCC BAA-1088 / PV-4).